A 132-amino-acid chain; its full sequence is MGRDTISNILTSIRNADMNKKETVRIPSTNIIESIVRILLREGFIENVRKHQENNKNFLVSTLRHRRNRTGTYRNILKRISRPGLRIYSNSQRIPRILGGMGIVILSTSRGIMTDREARLEGIGGEILCSIW.

It belongs to the universal ribosomal protein uS8 family. As to quaternary structure, part of the 30S ribosomal subunit.

Its subcellular location is the plastid. It is found in the chloroplast. Its function is as follows. One of the primary rRNA binding proteins, it binds directly to 16S rRNA central domain where it helps coordinate assembly of the platform of the 30S subunit. This is Small ribosomal subunit protein uS8c (rps8) from Ceratophyllum demersum (Rigid hornwort).